We begin with the raw amino-acid sequence, 288 residues long: Elongation factor Ts (288 aa).

An involved in Mg(2+) ion dislocation from EF-Tu region spans residues 82-85 (TDFV).

The protein belongs to the EF-Ts family.

Its subcellular location is the cytoplasm. Its function is as follows. Associates with the EF-Tu.GDP complex and induces the exchange of GDP to GTP. It remains bound to the aminoacyl-tRNA.EF-Tu.GTP complex up to the GTP hydrolysis stage on the ribosome. This Chlorobium phaeobacteroides (strain BS1) protein is Elongation factor Ts.